The following is a 174-amino-acid chain: Protein TM_1551 (174 aa).

Positions 2–174 constitute an AMMECR1 domain; the sequence is IGEHPYVKWA…IYRFTVERYK (173 aa).

The chain is Protein TM_1551 from Thermotoga maritima (strain ATCC 43589 / DSM 3109 / JCM 10099 / NBRC 100826 / MSB8).